We begin with the raw amino-acid sequence, 91 residues long: Uteroglobin (91 aa).

Positions 1-21 (MKLTITLALVTLALLCSPASA) are cleaved as a signal peptide.

This sequence belongs to the secretoglobin family. In terms of assembly, antiparallel homodimer; disulfide-linked. Interaction with LMBR1L is controversial.

The protein localises to the secreted. In terms of biological role, uteroglobin binds progesterone specifically and with high affinity. It may regulate progesterone concentrations reaching the blastocyst. It is also a potent inhibitor of phospholipase A2. This chain is Uteroglobin (SCGB1A1), found in Lepus capensis (Brown hare).